The following is a 245-amino-acid chain: DNA repair protein RecO (245 aa).

Belongs to the RecO family.

Involved in DNA repair and RecF pathway recombination. This Klebsiella pneumoniae (strain 342) protein is DNA repair protein RecO.